A 526-amino-acid polypeptide reads, in one-letter code: Beta,beta-carotene 15,15'-dioxygenase (526 aa).

Fe cation contacts are provided by His-172, His-236, His-307, and His-512.

Belongs to the carotenoid oxygenase family. Fe(2+) is required as a cofactor.

It localises to the cytoplasm. Its subcellular location is the cytosol. It catalyses the reaction all-trans-beta-carotene + O2 = 2 all-trans-retinal. The protein operates within cofactor metabolism; retinol metabolism. Symmetrically cleaves beta-carotene into two molecules of retinal using a dioxygenase mechanism. This Gallus gallus (Chicken) protein is Beta,beta-carotene 15,15'-dioxygenase.